The primary structure comprises 251 residues: Flap endonuclease Xni (251 aa).

Asp104 contributes to the Mg(2+) binding site. The 91-residue stretch at 160–250 (VLPRQLPDYW…SGNLQQLRLK (91 aa)) folds into the 5'-3' exonuclease domain. Residues Leu171, Ala172, Pro180, Val182, and Val185 each coordinate K(+). Positions 184 to 189 (GVGAKT) are interaction with DNA.

The protein belongs to the Xni family. Requires Mg(2+) as cofactor. It depends on K(+) as a cofactor.

Has flap endonuclease activity. During DNA replication, flap endonucleases cleave the 5'-overhanging flap structure that is generated by displacement synthesis when DNA polymerase encounters the 5'-end of a downstream Okazaki fragment. This is Flap endonuclease Xni from Yersinia pestis bv. Antiqua (strain Nepal516).